The sequence spans 801 residues: Squamosa promoter-binding-like protein 7 (801 aa).

Disordered stretches follow at residues 1–23 (MSSL…LVND) and 59–91 (SPPL…DRVR). The SBP-type; atypical zinc-finger motif lies at 135-212 (VARCQVPDCE…ERHNNRRKRK (78 aa)). Cys138, Cys143, Cys160, Cys163, Cys179, Cys182, His186, and Cys198 together coordinate Zn(2+). A Bipartite nuclear localization signal motif is present at residues 195 to 211 (KRSCRRKLERHNNRRKR). Residues 203–213 (ERHNNRRKRKP) show a composition bias toward basic residues. 2 disordered regions span residues 203–258 (ERHN…PSLI) and 286–313 (GSGE…NKSA). Residues 222–233 (EQQQVLSQNDNS) are compositionally biased toward polar residues. Over residues 249–258 (QRAEEEPSLI) the composition is skewed to basic and acidic residues. Over residues 304 to 313 (SPSNGDNKSA) the composition is skewed to polar residues.

In terms of assembly, homodimer. Interacts with KIN17. Interacts with HY5. Requires Zn(2+) as cofactor. As to expression, expressed in roots rosette leaves, cauline leaves, stems, flowers and siliques.

It is found in the nucleus speckle. Functionally, transcription factor that participates in reprogramming global gene expression during copper deficiency in order to improve the metal uptake and prioritize its distribution to copper proteins of major importance. Binds directly to 5'-GTAC-3' motifs in the microRNA (miRNA) promoter of the stress-responsive miRNAs miR398b and miR398c to activate their transcription. During copper deficiency, activates the copper transporters COPT1 and COPT2, and the copper chaperone CCH, directly or indirectly via miRNAs. Required for the expression of the miRNAs miR397, miR408 and miR857. Acts coordinately with HY5 to regulate miR408 and its target genes in response to changes in light and copper conditions. Activates miR857 and its target genes in response to low copper conditions. Involved in cadmium stress response by regulating miR397a, miR398b, miR398c and miR857. Required for iron homeostasis during copper deficiency. This is Squamosa promoter-binding-like protein 7 (SPL7) from Arabidopsis thaliana (Mouse-ear cress).